The primary structure comprises 116 residues: Large ribosomal subunit protein bL19 (116 aa).

This sequence belongs to the bacterial ribosomal protein bL19 family.

Its function is as follows. This protein is located at the 30S-50S ribosomal subunit interface and may play a role in the structure and function of the aminoacyl-tRNA binding site. The chain is Large ribosomal subunit protein bL19 from Geobacillus sp. (strain WCH70).